A 422-amino-acid chain; its full sequence is Glutamate-1-semialdehyde 2,1-aminomutase (422 aa).

At Lys-258 the chain carries N6-(pyridoxal phosphate)lysine.

Belongs to the class-III pyridoxal-phosphate-dependent aminotransferase family. HemL subfamily. As to quaternary structure, homodimer. The cofactor is pyridoxal 5'-phosphate.

It is found in the cytoplasm. It carries out the reaction (S)-4-amino-5-oxopentanoate = 5-aminolevulinate. It participates in porphyrin-containing compound metabolism; protoporphyrin-IX biosynthesis; 5-aminolevulinate from L-glutamyl-tRNA(Glu): step 2/2. This is Glutamate-1-semialdehyde 2,1-aminomutase from Chlamydia trachomatis serovar D (strain ATCC VR-885 / DSM 19411 / UW-3/Cx).